The following is a 569-amino-acid chain: 4-hydroxy-7-methoxy-3-oxo-3,4-dihydro-2H-1,4-benzoxazin-2-yl glucoside beta-D-glucosidase 1a, chloroplastic (569 aa).

A chloroplast-targeting transit peptide spans 1 to 50 (MALLAAATLNPTTHLSLRSRAGRNSENLWLRSAASSQKSKGRFCNLTIRA). A beta-D-glucoside is bound by residues Q92, H194, and 239–240 (NE). E240 functions as the Proton donor in the catalytic mechanism. C259 and C265 form a disulfide bridge. A beta-D-glucoside contacts are provided by residues Y383, E456, W504, 511 to 512 (EW), and F520. E456 functions as the Nucleophile in the catalytic mechanism.

The protein belongs to the glycosyl hydrolase 1 family. In terms of assembly, homo- and heterohexamers. Expressed in young seedlings early after germination.

It is found in the plastid. It localises to the chloroplast. The enzyme catalyses Hydrolysis of terminal, non-reducing beta-D-glucosyl residues with release of beta-D-glucose.. The catalysed reaction is DIMBOA beta-D-glucoside + H2O = DIMBOA + D-glucose. It catalyses the reaction DIBOA beta-D-glucoside + H2O = DIBOA + D-glucose. Acts in defense of young plant parts against pests via the production of hydroxamic acids from hydroxamic acid glucosides. Enzymatic activity is highly correlated with plant growth. The preferred substrate is DIMBOA-beta-D-glucoside. The sequence is that of 4-hydroxy-7-methoxy-3-oxo-3,4-dihydro-2H-1,4-benzoxazin-2-yl glucoside beta-D-glucosidase 1a, chloroplastic (GLU1A) from Triticum aestivum (Wheat).